We begin with the raw amino-acid sequence, 185 residues long: Elongation factor P (185 aa).

It belongs to the elongation factor P family.

The protein resides in the cytoplasm. It functions in the pathway protein biosynthesis; polypeptide chain elongation. Involved in peptide bond synthesis. Stimulates efficient translation and peptide-bond synthesis on native or reconstituted 70S ribosomes in vitro. Probably functions indirectly by altering the affinity of the ribosome for aminoacyl-tRNA, thus increasing their reactivity as acceptors for peptidyl transferase. The polypeptide is Elongation factor P (Kosmotoga olearia (strain ATCC BAA-1733 / DSM 21960 / TBF 19.5.1)).